A 371-amino-acid polypeptide reads, in one-letter code: Aldose sugar dehydrogenase YliI (371 aa).

Positions Met-1–Ala-20 are cleaved as a signal peptide. Gln-82 serves as a coordination point for pyrroloquinoline quinone. His-147 acts as the Proton acceptor in catalysis. The interval Arg-214 to Asn-215 is PQQ. Residues Glu-240 and Tyr-250 each contribute to the Ca(2+) site. Position 261 (Tyr-261) interacts with pyrroloquinoline quinone. PQQ regions lie at residues Ala-312–Lys-314 and Arg-341–Arg-343.

Belongs to the PQQ oxidoreductase GdhB family. In terms of assembly, monomer. Requires Ca(2+) as cofactor. The cofactor is pyrroloquinoline quinone.

The protein resides in the cell outer membrane. Aldose sugar dehydrogenase with broad substrate specificity. The physiological substrate is unknown. Can oxidize glucose to gluconolactone. Can also utilize D-arabinose, L-arabinose and 2-deoxy-glucose. Has higher activity towards oligomeric sugars, such as maltose, maltotriose or cellobiose. It may function to input sugar-derived electrons into the respiratory network. In Escherichia coli (strain K12), this protein is Aldose sugar dehydrogenase YliI (yliI).